A 273-amino-acid chain; its full sequence is Ribosomal RNA small subunit methyltransferase A (273 aa).

S-adenosyl-L-methionine contacts are provided by asparagine 19, leucine 21, glycine 46, glutamate 71, aspartate 94, and asparagine 117.

The protein belongs to the class I-like SAM-binding methyltransferase superfamily. rRNA adenine N(6)-methyltransferase family. RsmA subfamily.

The protein localises to the cytoplasm. It catalyses the reaction adenosine(1518)/adenosine(1519) in 16S rRNA + 4 S-adenosyl-L-methionine = N(6)-dimethyladenosine(1518)/N(6)-dimethyladenosine(1519) in 16S rRNA + 4 S-adenosyl-L-homocysteine + 4 H(+). In terms of biological role, specifically dimethylates two adjacent adenosines (A1518 and A1519) in the loop of a conserved hairpin near the 3'-end of 16S rRNA in the 30S particle. May play a critical role in biogenesis of 30S subunits. This is Ribosomal RNA small subunit methyltransferase A from Burkholderia ambifaria (strain MC40-6).